The following is a 117-amino-acid chain: MEAKAVARTIRIAPRKVRLVLDLIRGKNAGEAIAILKLTNKASSPVIEKVLMSALANAEHNYDMNTDELVVKEAYANEGPTLKRFRPRAQGRASAINKRTSHITIVVSDGKEEAKEA.

This sequence belongs to the universal ribosomal protein uL22 family. In terms of assembly, part of the 50S ribosomal subunit.

Its function is as follows. This protein binds specifically to 23S rRNA; its binding is stimulated by other ribosomal proteins, e.g. L4, L17, and L20. It is important during the early stages of 50S assembly. It makes multiple contacts with different domains of the 23S rRNA in the assembled 50S subunit and ribosome. In terms of biological role, the globular domain of the protein is located near the polypeptide exit tunnel on the outside of the subunit, while an extended beta-hairpin is found that lines the wall of the exit tunnel in the center of the 70S ribosome. This chain is Large ribosomal subunit protein uL22, found in Staphylococcus epidermidis (strain ATCC 35984 / DSM 28319 / BCRC 17069 / CCUG 31568 / BM 3577 / RP62A).